Here is a 469-residue protein sequence, read N- to C-terminus: 3-isopropylmalate dehydratase large subunit (469 aa).

[4Fe-4S] cluster-binding residues include C347, C407, and C410.

Belongs to the aconitase/IPM isomerase family. LeuC type 1 subfamily. Heterodimer of LeuC and LeuD. It depends on [4Fe-4S] cluster as a cofactor.

The catalysed reaction is (2R,3S)-3-isopropylmalate = (2S)-2-isopropylmalate. Its pathway is amino-acid biosynthesis; L-leucine biosynthesis; L-leucine from 3-methyl-2-oxobutanoate: step 2/4. Its function is as follows. Catalyzes the isomerization between 2-isopropylmalate and 3-isopropylmalate, via the formation of 2-isopropylmaleate. This Prochlorococcus marinus (strain MIT 9515) protein is 3-isopropylmalate dehydratase large subunit.